Consider the following 463-residue polypeptide: Nicotinate phosphoribosyltransferase pncB2 (463 aa).

Position 202 is a phosphohistidine (His202).

This sequence belongs to the NAPRTase family. Post-translationally, transiently phosphorylated on a His residue during the reaction cycle. Phosphorylation strongly increases the affinity for substrates and increases the rate of nicotinate D-ribonucleotide production. Dephosphorylation regenerates the low-affinity form of the enzyme, leading to product release.

The enzyme catalyses nicotinate + 5-phospho-alpha-D-ribose 1-diphosphate + ATP + H2O = nicotinate beta-D-ribonucleotide + ADP + phosphate + diphosphate. It functions in the pathway cofactor biosynthesis; NAD(+) biosynthesis; nicotinate D-ribonucleotide from nicotinate: step 1/1. Its function is as follows. Involved in the Preiss-Handler pathway, which is a recycling route that permits the salvage of free nicotinamide (NM) and nicotinic acid (Na) involved in the NAD biosynthesis. Catalyzes the synthesis of beta-nicotinate D-ribonucleotide from nicotinate and 5-phospho-D-ribose 1-phosphate at the expense of ATP. It is not able to use nicotinamide. PncB2 appears to be responsible for the increased salvage synthesis of NAD during infection of host tissues. In Mycobacterium tuberculosis (strain CDC 1551 / Oshkosh), this protein is Nicotinate phosphoribosyltransferase pncB2 (pncB2).